Consider the following 131-residue polypeptide: Small ribosomal subunit protein eS17 (131 aa).

It belongs to the eukaryotic ribosomal protein eS17 family.

This Theileria annulata protein is Small ribosomal subunit protein eS17 (RPS17).